We begin with the raw amino-acid sequence, 235 residues long: Biosynthetic peptidoglycan transglycosylase (235 aa).

Residues 12–34 (GLGKLLLAALLSTIVSVALLRFI) traverse the membrane as a helical segment.

It belongs to the glycosyltransferase 51 family.

It localises to the cell inner membrane. It catalyses the reaction [GlcNAc-(1-&gt;4)-Mur2Ac(oyl-L-Ala-gamma-D-Glu-L-Lys-D-Ala-D-Ala)](n)-di-trans,octa-cis-undecaprenyl diphosphate + beta-D-GlcNAc-(1-&gt;4)-Mur2Ac(oyl-L-Ala-gamma-D-Glu-L-Lys-D-Ala-D-Ala)-di-trans,octa-cis-undecaprenyl diphosphate = [GlcNAc-(1-&gt;4)-Mur2Ac(oyl-L-Ala-gamma-D-Glu-L-Lys-D-Ala-D-Ala)](n+1)-di-trans,octa-cis-undecaprenyl diphosphate + di-trans,octa-cis-undecaprenyl diphosphate + H(+). It functions in the pathway cell wall biogenesis; peptidoglycan biosynthesis. Functionally, peptidoglycan polymerase that catalyzes glycan chain elongation from lipid-linked precursors. This chain is Biosynthetic peptidoglycan transglycosylase, found in Aeromonas hydrophila subsp. hydrophila (strain ATCC 7966 / DSM 30187 / BCRC 13018 / CCUG 14551 / JCM 1027 / KCTC 2358 / NCIMB 9240 / NCTC 8049).